A 266-amino-acid chain; its full sequence is Coiled-coil domain-containing glutamate-rich protein 2 (266 aa).

An N-terminal signal peptide occupies residues 1–23 (MPPRGPASELLLLRLLLLGAATA). Composition is skewed to basic and acidic residues over residues 90-100 (EAGKMRSSQEV), 154-188 (LWQRHLENGGDLQKRVAEKASDKETAQFQAEEKGV), 204-213 (GGGERREDLP), and 221-266 (QPEA…RREG). The segment at 90–266 (EAGKMRSSQE…TLGEQLRREG (177 aa)) is disordered.

In terms of tissue distribution, expressed at higher levels in fetal brain and skeletal muscle. Lower expression is detected in fetal kidney, liver, spleen, thymus, heart and lung.

The protein resides in the secreted. This Homo sapiens (Human) protein is Coiled-coil domain-containing glutamate-rich protein 2 (CCER2).